The chain runs to 112 residues: Cryptic phage CTXphi transcriptional repressor RstR (112 aa).

The HTH cro/C1-type domain occupies 7-61 (LANQRKAINKTQAQMADEIGISLTSYKKYESGEGLPTMENLVKIADALEISIDEL). Positions 18–37 (QAQMADEIGISLTSYKKYES) form a DNA-binding region, H-T-H motif.

Functionally, transcriptional repressor of the integrated CTXPhi phage gene rstA2. This chain is Cryptic phage CTXphi transcriptional repressor RstR (rstR1), found in Vibrio cholerae serotype O1 (strain ATCC 39315 / El Tor Inaba N16961).